The chain runs to 425 residues: MLDQRLVRDNPDLIANELGRRGMTLDLTGLQLIAQQQRNLEEQRSSLQAEGNRIGKEVGQRIQQGSDPKASDVAELRHQGNLIKQKVAVLEDEEKQLSARLREQLLSLPNLPSPDCPEGRDENDNQERHCWGKPREGKDLLEHWSIAERLNLFETERSVRIAQSRFVTLMGQGARLERALINFMLDLHTSKGYREVMPPVLVNTASLTGSGQLPKFAEESFRCAEDDLWLTPTAEVPVTSLHRDEIIPADQLPLRYAAYSPCFRREAGSYGRDTRGLIRLHQFNKVELYWFVHPDHSQAAHAQITADAEAVLQALELPYRVIELCTGDLGFSSSRTYDLEVWLPGAGAFREISSCSICGDFQARRSAIRTKDQKGTRLIHTLNGSGLAVGRTMAALLETGQQSDGSVLLPKALVPYFGKDRLEPE.

Disordered stretches follow at residues 43 to 68 (QRSS…GSDP) and 108 to 131 (LPNL…RHCW). Residues 117–131 (PEGRDENDNQERHCW) are compositionally biased toward basic and acidic residues. 233–235 (TAE) contributes to the L-serine binding site. Residue 264-266 (RRE) coordinates ATP. Residue E287 participates in L-serine binding. 351–354 (EISS) is a binding site for ATP. S385 contacts L-serine.

It belongs to the class-II aminoacyl-tRNA synthetase family. Type-1 seryl-tRNA synthetase subfamily. In terms of assembly, homodimer. The tRNA molecule binds across the dimer.

The protein resides in the cytoplasm. The catalysed reaction is tRNA(Ser) + L-serine + ATP = L-seryl-tRNA(Ser) + AMP + diphosphate + H(+). It catalyses the reaction tRNA(Sec) + L-serine + ATP = L-seryl-tRNA(Sec) + AMP + diphosphate + H(+). The protein operates within aminoacyl-tRNA biosynthesis; selenocysteinyl-tRNA(Sec) biosynthesis; L-seryl-tRNA(Sec) from L-serine and tRNA(Sec): step 1/1. Its function is as follows. Catalyzes the attachment of serine to tRNA(Ser). Is also able to aminoacylate tRNA(Sec) with serine, to form the misacylated tRNA L-seryl-tRNA(Sec), which will be further converted into selenocysteinyl-tRNA(Sec). The polypeptide is Serine--tRNA ligase (Prochlorococcus marinus (strain MIT 9303)).